The chain runs to 29 residues: Trypsin inhibitor 2 (29 aa).

Intrachain disulfides connect cysteine 3–cysteine 20, cysteine 10–cysteine 22, and cysteine 16–cysteine 28.

It belongs to the protease inhibitor I7 (squash-type serine protease inhibitor) family.

Its subcellular location is the secreted. Its function is as follows. Inhibits trypsin. This chain is Trypsin inhibitor 2, found in Bryonia dioica (Red bryony).